The chain runs to 153 residues: NADPH-dependent 7-cyano-7-deazaguanine reductase (153 aa).

The segment at 1 to 26 (MVKIHDGASQLGANVAAPRSPEEATL) is disordered. Residue cysteine 51 is the Thioimide intermediate of the active site. Aspartate 58 functions as the Proton donor in the catalytic mechanism. Substrate is bound by residues 73–75 (VES) and 92–93 (HE).

This sequence belongs to the GTP cyclohydrolase I family. QueF type 1 subfamily.

It is found in the cytoplasm. The enzyme catalyses 7-aminomethyl-7-carbaguanine + 2 NADP(+) = 7-cyano-7-deazaguanine + 2 NADPH + 3 H(+). It functions in the pathway tRNA modification; tRNA-queuosine biosynthesis. Functionally, catalyzes the NADPH-dependent reduction of 7-cyano-7-deazaguanine (preQ0) to 7-aminomethyl-7-deazaguanine (preQ1). The polypeptide is NADPH-dependent 7-cyano-7-deazaguanine reductase (Methylocella silvestris (strain DSM 15510 / CIP 108128 / LMG 27833 / NCIMB 13906 / BL2)).